The following is a 944-amino-acid chain: MNKKHGFSLTLTALAIAAAFPSYAANPETAASDAAQSQSLKEITVRAAKVGRRSKEATGLGKIVKTSETLNKEQVLGIRDLTRYDPGVAVVEQGNGASGGYSIRGVDKNRVAVSVDGVAQIQAFTVQGSLSGYGGRGGSGAINEIEYENISTVEIDKGAGSSDHGSGALGGAVAFRTKEAADLISDGKSWGIQAKTAYGSKNRQFMKSLGAGFSKDGWEGLLIRTERQGRETRPHGDIADGVEYGIDRLDAFRQTYDIQKQNKKAEYFLAEGEREPKPVAKLAGNGNYLKNQLNRWVEERKKNNQPLNAEEEAMVREAQARHENLSAQSYTGGGRILPDPMDYRSGSWLAKLGYRFGGRHYVGGVFEDTKQRYDIRDMTEKQYYGTDEAKKFSNKSGVYDGNDFRDGLYFVPNIEEWKGDTNLVKGIGLKYSRTKFIDEHHRRRRMGLLYRYENEAYSDNWADKAVLSFDKQGVATDNNTLKLNCAVYPAVDKSCRASADKPYSYDSSDRFHYREQHNVLNASFEKSLKNKWTKHHLTLGFGYDASKAISRPEQLSHNAARISESTGFDDNNQDKYLLGKPEVVEGSVCGYIETLRSRKCVPRKINGSNIHISLNDRFSIGKYFDFSLGGRYDRQNFTTSEELVRSGRYVDRSWNSGIVFKPNRHFSVSYRASSGFRTPSFQELFGIDIYHDYPKGWQRPALKSEKAANREIGLQWKGDFGFLEISSFRNRYTDMIAVADHKTQLPDSTGRLTEIDIRDYYNAQNMSLQGVNILGKIDWNGVYGKLPEGLYTTLAYNRIKPKSVSNRPDLSLRSYALDAVQPSRYVLGFGYDQPEGKWGANIMLTYSKGKNPDELAYLAGDQKRYSTKRASSSWSTADVSAYLNLKKRLTLRAAIYNIGNYRYVTWESLRQTAESTANRHGGDSNYGRYAAPGRNFSLALEMKF.

Positions 1 to 27 are cleaved as a signal peptide; it reads MNKKHGFSLTLTALAIAAAFPSYAANP. Residues 52–178 enclose the TBDR plug domain; that stretch reads RRSKEATGLG…LGGAVAFRTK (127 aa). One can recognise a TBDR beta-barrel domain in the interval 189–944; it reads SWGIQAKTAY…NFSLALEMKF (756 aa). Positions 927–944 match the TonB C-terminal box motif; it reads GRYAAPGRNFSLALEMKF.

The protein belongs to the TonB-dependent receptor family.

The protein resides in the cell outer membrane. Unknown. May be an iron-siderophore receptor. The chain is Lactoferrin-binding protein A (lbpA) from Neisseria meningitidis serogroup A / serotype 4A (strain DSM 15465 / Z2491).